Reading from the N-terminus, the 347-residue chain is Serpentine receptor class beta-2 (347 aa).

Helical transmembrane passes span 27–47 (IAQLWTFVVSILAIPALYIFL), 62–82 (FLLVCYFSASFVFAVLLAFLF), 108–128 (GNLSLTLFMTIQMIMPLGFSI), 146–166 (FLGPLLVFTLIGIDLALLYHV), 194–214 (FWELLYAEIGNFICNCIFLLV), 246–266 (LIVSFTHLLFVGWYLIATIFV), and 288–308 (ITVPTYNLTIVFVGIKALSFM).

This sequence belongs to the nematode receptor-like protein srb family.

It is found in the membrane. This is Serpentine receptor class beta-2 (srb-2) from Caenorhabditis elegans.